Here is a 484-residue protein sequence, read N- to C-terminus: Solute carrier family 40 member 1 (484 aa).

The next 11 membrane-spanning stretches (helical) occupy residues 58 to 78 (LLTA…GPIV), 94 to 114 (WLLL…ALLV), 123 to 143 (GFPA…LAAL), 189 to 209 (VLSG…ALAA), 212 to 232 (LAAV…FPAL), 279 to 299 (VVLP…FGTL), 308 to 328 (GIPA…GIAA), 346 to 366 (LWSI…VWAG), 377 to 397 (LMGG…AVMQ), 413 to 433 (GVQN…GIIV), and 442 to 462 (LIVL…MHVY).

This sequence belongs to the ferroportin (FP) (TC 2.A.100) family. SLC40A subfamily.

The protein resides in the membrane. In terms of biological role, may be involved in iron transport and iron homeostasis. The polypeptide is Solute carrier family 40 member 1 (Oryza sativa subsp. japonica (Rice)).